A 377-amino-acid polypeptide reads, in one-letter code: Succinyl-diaminopimelate desuccinylase (377 aa).

His-66 serves as a coordination point for Zn(2+). Asp-68 is an active-site residue. Asp-99 serves as a coordination point for Zn(2+). The active-site Proton acceptor is the Glu-133. Zn(2+)-binding residues include Glu-134, Glu-162, and His-348.

It belongs to the peptidase M20A family. DapE subfamily. Homodimer. Zn(2+) is required as a cofactor. Co(2+) serves as cofactor.

It carries out the reaction N-succinyl-(2S,6S)-2,6-diaminopimelate + H2O = (2S,6S)-2,6-diaminopimelate + succinate. Its pathway is amino-acid biosynthesis; L-lysine biosynthesis via DAP pathway; LL-2,6-diaminopimelate from (S)-tetrahydrodipicolinate (succinylase route): step 3/3. Catalyzes the hydrolysis of N-succinyl-L,L-diaminopimelic acid (SDAP), forming succinate and LL-2,6-diaminopimelate (DAP), an intermediate involved in the bacterial biosynthesis of lysine and meso-diaminopimelic acid, an essential component of bacterial cell walls. The sequence is that of Succinyl-diaminopimelate desuccinylase from Histophilus somni (strain 2336) (Haemophilus somnus).